A 309-amino-acid polypeptide reads, in one-letter code: Protein-L-isoaspartate O-methyltransferase (309 aa).

The tract at residues Met1–Val46 is disordered. Basic and acidic residues predominate over residues Glu14–Ala32. Low complexity predominate over residues Ala33–Val46. Residue Ser156 is part of the active site.

It belongs to the methyltransferase superfamily. L-isoaspartyl/D-aspartyl protein methyltransferase family.

It localises to the cytoplasm. It catalyses the reaction [protein]-L-isoaspartate + S-adenosyl-L-methionine = [protein]-L-isoaspartate alpha-methyl ester + S-adenosyl-L-homocysteine. Catalyzes the methyl esterification of L-isoaspartyl residues in peptides and proteins that result from spontaneous decomposition of normal L-aspartyl and L-asparaginyl residues. It plays a role in the repair and/or degradation of damaged proteins. The chain is Protein-L-isoaspartate O-methyltransferase from Burkholderia vietnamiensis (strain G4 / LMG 22486) (Burkholderia cepacia (strain R1808)).